A 111-amino-acid chain; its full sequence is MKGRQGERVRLYVRGTVLGYKRSKSNQYPNTSLVQIEGVNTQEEVNWYKGKRLAYIYKAKTKKNGSHYRCIWGKVTRPHGNSGVVRSKFTSNLPPKSMGARVRVFMYPSNI.

It belongs to the eukaryotic ribosomal protein eL33 family.

The sequence is that of Large ribosomal subunit protein eL33x (RPL35AD) from Arabidopsis thaliana (Mouse-ear cress).